The chain runs to 66 residues: Hemicalcin (66 aa).

The N-terminal stretch at 1-21 is a signal peptide; it reads MRASLFIVIFVVSFITISCLS. The propeptide occupies 22–33; the sequence is TDDEEARWIEKR. 3 cysteine pairs are disulfide-bonded: Cys36–Cys50, Cys43–Cys54, and Cys49–Cys65. Residues 55-57 form an essential for stimulation of [3H]ryanodine binding to RYR1 region; sequence KRR.

The protein belongs to the scorpion calcin family. Expressed by the venom gland.

Its subcellular location is the secreted. Functionally, this toxin stabilizes ryanodine receptor 1 (RyR1) opening in a long-lasting subconductance state (20% and 38% of the full conductance state have been found). It promotes an increase in the opening probability at intermediate concentration. Furthermore, it triggers calcium release from sarcoplasmic vesicles (68 nM are enough to induce a sharp release, and 45% of the total calcium is released after toxin (100 nM) addition) probably by acting as a cell-penetrating peptide (CPP). In addition, it has been shown to dose-dependently stimulate ryanodine binding to RyR1 (EC(50)=6.9-71 nM). It also augments the bell-shaped calcium-[3H]ryanodine binding curve that is maximal at about 10 uM calcium concentration. It binds a different site as ryanodine. It acts synergistically with caffeine. In vivo, intracerebroventricular injection into mice induces neurotoxic symptoms, followed by death. In Hemiscorpius lepturus (Scorpion), this protein is Hemicalcin.